Consider the following 440-residue polypeptide: Asparagine--tRNA ligase (440 aa).

This sequence belongs to the class-II aminoacyl-tRNA synthetase family. In terms of assembly, homodimer.

It is found in the cytoplasm. It carries out the reaction tRNA(Asn) + L-asparagine + ATP = L-asparaginyl-tRNA(Asn) + AMP + diphosphate + H(+). This chain is Asparagine--tRNA ligase, found in Chloroflexus aurantiacus (strain ATCC 29364 / DSM 637 / Y-400-fl).